The sequence spans 72 residues: MDNNYLDASHRKRLVCSNCNGTNTTLWRRKAEGDPVCNACGLYFKLHHVTRPIPMKKNKKHAVLPAPGISKL.

The GATA-type zinc-finger motif lies at 16–40; it reads CSNCNGTNTTLWRRKAEGDPVCNAC.

Its subcellular location is the nucleus. Probable transcription factor. Plays a role in regulating heme-dependent expression of heme transporter hrg-1. Modulates lifespan in a daf-16-dependent manner. This is Probable transcription factor elt-4 from Caenorhabditis elegans.